Reading from the N-terminus, the 162-residue chain is Regulatory protein RecX (162 aa).

It belongs to the RecX family.

It localises to the cytoplasm. In terms of biological role, modulates RecA activity. The polypeptide is Regulatory protein RecX (Xanthomonas campestris pv. campestris (strain 8004)).